Here is a 415-residue protein sequence, read N- to C-terminus: Gamma-glutamyl phosphate reductase (415 aa).

This sequence belongs to the gamma-glutamyl phosphate reductase family.

The protein localises to the cytoplasm. The catalysed reaction is L-glutamate 5-semialdehyde + phosphate + NADP(+) = L-glutamyl 5-phosphate + NADPH + H(+). Its pathway is amino-acid biosynthesis; L-proline biosynthesis; L-glutamate 5-semialdehyde from L-glutamate: step 2/2. In terms of biological role, catalyzes the NADPH-dependent reduction of L-glutamate 5-phosphate into L-glutamate 5-semialdehyde and phosphate. The product spontaneously undergoes cyclization to form 1-pyrroline-5-carboxylate. This is Gamma-glutamyl phosphate reductase from Listeria monocytogenes serotype 4b (strain F2365).